The primary structure comprises 330 residues: MKTAYIAKQRQISFVKSHFSRQLEERLGLIEVQAPILSRVGDGTQDNLSGCEKAVQVKVKALPDAQFEVVHSLAKWKRQTLGQHDFSAGEGLYTHMKALRPDEDRLSPLHSVYVDQWDWERVMGDGERQFSTLKSTVEAIWAGIKATEAAVSEEFGLAPFLPDQIHFVHSQELLSRYPDLDAKGRERAIAKDLGAVFLVGIGGKLSDGHRHDVRAPDYDDWSTPSELGHAGLNGDILVWNPVLEDAFELSSMGIRVDADTLKHQLALTGDEDRLQLEWHQALLRGEMPQTIGGGIGQSRLTMLLLQLPHIGQVQCGVWPAAVRENVPSLL.

The protein belongs to the class-II aminoacyl-tRNA synthetase family. AsnA subfamily.

It localises to the cytoplasm. The catalysed reaction is L-aspartate + NH4(+) + ATP = L-asparagine + AMP + diphosphate + H(+). It functions in the pathway amino-acid biosynthesis; L-asparagine biosynthesis; L-asparagine from L-aspartate (ammonia route): step 1/1. The chain is Aspartate--ammonia ligase from Shigella sonnei (strain Ss046).